Here is a 302-residue protein sequence, read N- to C-terminus: 4-diphosphocytidyl-2-C-methyl-D-erythritol kinase (302 aa).

The active site involves Lys-13. 101 to 111 (PVASGIGGGSS) lines the ATP pocket. Asp-143 is an active-site residue.

Belongs to the GHMP kinase family. IspE subfamily.

The enzyme catalyses 4-CDP-2-C-methyl-D-erythritol + ATP = 4-CDP-2-C-methyl-D-erythritol 2-phosphate + ADP + H(+). Its pathway is isoprenoid biosynthesis; isopentenyl diphosphate biosynthesis via DXP pathway; isopentenyl diphosphate from 1-deoxy-D-xylulose 5-phosphate: step 3/6. Functionally, catalyzes the phosphorylation of the position 2 hydroxy group of 4-diphosphocytidyl-2C-methyl-D-erythritol. The polypeptide is 4-diphosphocytidyl-2-C-methyl-D-erythritol kinase (Granulibacter bethesdensis (strain ATCC BAA-1260 / CGDNIH1)).